The primary structure comprises 337 residues: GTPase Obg (337 aa).

Positions 4 to 162 constitute an Obg domain; the sequence is SNFIDYVKVC…AWVILELKVL (159 aa). The region spanning 163–329 is the OBG-type G domain; the sequence is ADVGLVGFPN…LKDLLWTTMN (167 aa). Residues 169–176, 194–198, 216–219, 283–286, and 310–312 contribute to the GTP site; these read GFPNAGKS, FTTLA, DIPG, SKSD, and SSY. 2 residues coordinate Mg(2+): Ser176 and Thr196.

The protein belongs to the TRAFAC class OBG-HflX-like GTPase superfamily. OBG GTPase family. As to quaternary structure, monomer. Requires Mg(2+) as cofactor.

It localises to the cytoplasm. In terms of biological role, an essential GTPase which binds GTP, GDP and possibly (p)ppGpp with moderate affinity, with high nucleotide exchange rates and a fairly low GTP hydrolysis rate. Plays a role in control of the cell cycle, stress response, ribosome biogenesis and in those bacteria that undergo differentiation, in morphogenesis control. This Cytophaga hutchinsonii (strain ATCC 33406 / DSM 1761 / CIP 103989 / NBRC 15051 / NCIMB 9469 / D465) protein is GTPase Obg.